The following is a 290-amino-acid chain: Agmatinase (290 aa).

His-112, Asp-135, His-137, Asp-139, Asp-216, and Asp-218 together coordinate Mn(2+).

This sequence belongs to the arginase family. Agmatinase subfamily. It depends on Mn(2+) as a cofactor.

The catalysed reaction is agmatine + H2O = urea + putrescine. It participates in amine and polyamine biosynthesis; putrescine biosynthesis via agmatine pathway; putrescine from agmatine: step 1/1. Functionally, catalyzes the formation of putrescine from agmatine. In Bacillus anthracis, this protein is Agmatinase (speB).